We begin with the raw amino-acid sequence, 259 residues long: Major cell-binding factor (259 aa).

Residues 1–26 (MVFRKSLLKLAVFALGACVAFSNANA) form the signal peptide.

It belongs to the bacterial solute-binding protein 3 family.

The protein localises to the cell surface. Functionally, common antigen and a major cell adherence molecule. Most probably involved, with PEB1C, in a binding-protein-dependent transport system for an amino acid. May be involved in binding to intestinal cells. This is Major cell-binding factor (peb1A) from Campylobacter jejuni subsp. jejuni serotype O:23/36 (strain 81-176).